The primary structure comprises 568 residues: Dual specificity tyrosine-phosphorylation-regulated kinase 3 (568 aa).

A disordered region spans residues 1–168 (MKWKEKLGDG…HGVIGGPNNG (168 aa)). The segment covering 77–114 (SNTVQSDGISDSEKCSPTVSQGKSSDCLNTVKSNSSSK) has biased composition (polar residues). Positions 189-502 (YEVLKIIGKG…PAQALRHPWI (314 aa)) constitute a Protein kinase domain. Residues 195 to 203 (IGKGSFGQV) and lysine 218 each bind ATP. The Proton acceptor role is filled by aspartate 315. Serine 330 is modified (phosphoserine). Tyrosine 349 carries the phosphotyrosine modification. A Nuclear localization signal motif is present at residues 448–461 (RSRRGKKRGPPGSK).

This sequence belongs to the protein kinase superfamily. CMGC Ser/Thr protein kinase family. MNB/DYRK subfamily. As to quaternary structure, interacts with SIRT1. The cofactor is Mg(2+). Post-translationally, protein kinase activity is activated following autophosphorylation at Tyr-349. Autophosphorylation at Ser-330 stabilizes the protein and enhances the protein kinase activity. Ubiquitinated at anaphase by the anaphase-promoting complex (APC/C), leading to its degradation by the proteasome.

The protein localises to the nucleus. The protein resides in the cytoplasm. It is found in the nucleus speckle. It localises to the cytoplasmic granule. Its subcellular location is the cytoskeleton. The protein localises to the microtubule organizing center. The protein resides in the centrosome. It catalyses the reaction L-seryl-[protein] + ATP = O-phospho-L-seryl-[protein] + ADP + H(+). The enzyme catalyses L-threonyl-[protein] + ATP = O-phospho-L-threonyl-[protein] + ADP + H(+). The catalysed reaction is L-tyrosyl-[protein] + ATP = O-phospho-L-tyrosyl-[protein] + ADP + H(+). With respect to regulation, protein kinase activity is activated following autophosphorylation at Tyr-349. Dual-specificity protein kinase that promotes disassembly of several types of membraneless organelles during mitosis, such as stress granules, nuclear speckles and pericentriolar material. Dual-specificity tyrosine-regulated kinases (DYRKs) autophosphorylate a critical tyrosine residue in their activation loop and phosphorylate their substrate on serine and threonine residues. Acts as a central dissolvase of membraneless organelles during the G2-to-M transition, after the nuclear-envelope breakdown: acts by mediating phosphorylation of multiple serine and threonine residues in unstructured domains of proteins, such as SRRM1 and PCM1. Does not mediate disassembly of all membraneless organelles: disassembly of P-body and nucleolus is not regulated by DYRK3. Dissolution of membraneless organelles at the onset of mitosis is also required to release mitotic regulators, such as ZNF207, from liquid-unmixed organelles where they are sequestered and keep them dissolved during mitosis. Regulates mTORC1 by mediating the dissolution of stress granules: during stressful conditions, DYRK3 partitions from the cytosol to the stress granule, together with mTORC1 components, which prevents mTORC1 signaling. When stress signals are gone, the kinase activity of DYRK3 is required for the dissolution of stress granule and mTORC1 relocation to the cytosol: acts by mediating the phosphorylation of the mTORC1 inhibitor AKT1S1, allowing full reactivation of mTORC1 signaling. Also acts as a negative regulator of EPO-dependent erythropoiesis: may place an upper limit on red cell production during stress erythropoiesis. Inhibits cell death due to cytokine withdrawal in hematopoietic progenitor cells. Promotes cell survival upon genotoxic stress through phosphorylation of SIRT1: this in turn inhibits p53/TP53 activity and apoptosis. The sequence is that of Dual specificity tyrosine-phosphorylation-regulated kinase 3 from Macaca fascicularis (Crab-eating macaque).